A 731-amino-acid chain; its full sequence is MSNPGTRRNGSSIKIRLTVLCAKNLAKKDFFRLPDPFAKIVVDGSGQCHSTDTVKNTLDPKWNQHYDLYVGKTDSITISVWNHKKIHKKQGAGFLGCVRLLSNAISRLKDTGYQRLDLCKLNPSDTDAVRGQIVVSLQTRDRIGGGGSVVDCRGLLENEGTVYEDSGPGRPLSCLMEEPAPYTDGTGAAAGGGNCRFVESPSQDQRLLVQRLRNPEVRGPLQTPQNRPHGHQSPELPEGYEQRTTVQGQVYFLHTQTGVSTWHDPRIPRDLNSVNCDELGPLPPGWEVRSTVSGRIYFVDHNNRTTQFTDPRLHHIMNHQCQLKEPSQPLQLPSEGSVEDEELPAQRYERDLVQKLKVLRHELSLQQPQAGHCRIEVSREEIFEESYRQIMKMRPKDLKKRLMVKFRGEEGLDYGGVAREWLYLLCHEMLNPYYGLFQYSTDNIYTLQINPDSSINPDHLSYFHFVGRIMGLAVFHGHYINGGFTVPFYKQLLGKPIQLSDLESVDPELHKSLVWILENDITPVLDHTFCVEHNAFGRILQHELKPNGRNVPVTEENKKEYVRLYVNWRFMRGIEAQFLALQKGFNELIPQHLLKPFDQKELELIIGGLDKIDLNDWKSNTRLKHCVADSNIVRWFWQAVETFDEERRARLLQFVTGSTRVPLQGFKALQGSTGAAGPRLFTIHLIDANTDNLPKAHTCFNRIDIPPYESYEKLYEKLLTAVEETCGFAVE.

Residues 1 to 120 enclose the C2 domain; sequence MSNPGTRRNG…TGYQRLDLCK (120 aa). Ser200 carries the phosphoserine modification. A disordered region spans residues 216-237; that stretch reads EVRGPLQTPQNRPHGHQSPELP. 2 WW domains span residues 234-267 and 280-313; these read PELP…DPRI and GPLP…DPRL. Glycyl lysine isopeptide (Lys-Gly) (interchain with G-Cter in ubiquitin) cross-links involve residues Lys355 and Lys357. Positions 394–731 constitute an HECT domain; the sequence is RPKDLKKRLM…VEETCGFAVE (338 aa). The active-site Glycyl thioester intermediate is the Cys699.

Interacts with TRAF4. Interacts (via HECT domain) with FBXL15 (via LRR repeats). Interacts with SMAD7 and TGFBR1; SMAD7 recruits SMURF1 to TGFBR1 and regulates TGF-beta receptor degradation. Interacts with MAVS; the interaction is mediated by NDFIP1. Post-translationally, auto-ubiquitinated in presence of NDFIP1. Ubiquitinated by the SCF(FBXL15) complex at Lys-355 and Lys-357, leading to its degradation by the proteasome. Lys-357 is the primary ubiquitination site.

It is found in the cytoplasm. The protein localises to the cell membrane. It carries out the reaction S-ubiquitinyl-[E2 ubiquitin-conjugating enzyme]-L-cysteine + [acceptor protein]-L-lysine = [E2 ubiquitin-conjugating enzyme]-L-cysteine + N(6)-ubiquitinyl-[acceptor protein]-L-lysine.. It participates in protein modification; protein ubiquitination. In terms of biological role, E3 ubiquitin-protein ligase that acts as a negative regulator of BMP signaling pathway. Mediates ubiquitination and degradation of SMAD1 and SMAD5, 2 receptor-regulated SMADs specific for the BMP pathway. Promotes ubiquitination and subsequent proteasomal degradation of TRAF family members and RHOA. Promotes ubiquitination and subsequent proteasomal degradation of MAVS. Acts as an antagonist of TGF-beta signaling by ubiquitinating TGFBR1 and targeting it for degradation. Plays a role in dendrite formation by melanocytes. In Mus musculus (Mouse), this protein is E3 ubiquitin-protein ligase SMURF1 (Smurf1).